The primary structure comprises 260 residues: UPF0246 protein APJL_0596 (260 aa).

This sequence belongs to the UPF0246 family.

The protein is UPF0246 protein APJL_0596 of Actinobacillus pleuropneumoniae serotype 3 (strain JL03).